The following is a 202-amino-acid chain: Remorin 1.4 (202 aa).

Residues 1 to 10 (MAEEEPKKVT) are compositionally biased toward basic and acidic residues. Positions 1-79 (MAEEEPKKVT…VEEEKKEGSV (79 aa)) are disordered. The segment covering 25–39 (EKPAAAADVAPQEKP) has biased composition (low complexity). The span at 40–50 (VAPPPVLPSPA) shows a compositional bias: pro residues. Residues 68 to 79 (KEVEEEKKEGSV) show a composition bias toward basic and acidic residues. A coiled-coil region spans residues 123 to 169 (ENNKKAAVEAELKKMEEQLEKKKAEYVEQMKNKIAQIHKEAEEKRAM).

This sequence belongs to the remorin family.

The protein is Remorin 1.4 of Arabidopsis thaliana (Mouse-ear cress).